The chain runs to 183 residues: Holliday junction branch migration complex subunit RuvA (183 aa).

The interval 1-63 is domain I; the sequence is MIVGLIGVVE…EDANLLYGFL (63 aa). The domain II stretch occupies residues 64–139; sequence EESEKILFER…FFIQDENRPA (76 aa). Alanine 139 is a region of interest (flexible linker). A domain III region spans residues 139–183; that stretch reads ARNEVFLALESLGFKSAEINKVLKTLKPNLSIEAAIKEALQQLRS.

This sequence belongs to the RuvA family. As to quaternary structure, homotetramer. Forms an RuvA(8)-RuvB(12)-Holliday junction (HJ) complex. HJ DNA is sandwiched between 2 RuvA tetramers; dsDNA enters through RuvA and exits via RuvB. An RuvB hexamer assembles on each DNA strand where it exits the tetramer. Each RuvB hexamer is contacted by two RuvA subunits (via domain III) on 2 adjacent RuvB subunits; this complex drives branch migration. In the full resolvosome a probable DNA-RuvA(4)-RuvB(12)-RuvC(2) complex forms which resolves the HJ.

It localises to the cytoplasm. The RuvA-RuvB-RuvC complex processes Holliday junction (HJ) DNA during genetic recombination and DNA repair, while the RuvA-RuvB complex plays an important role in the rescue of blocked DNA replication forks via replication fork reversal (RFR). RuvA specifically binds to HJ cruciform DNA, conferring on it an open structure. The RuvB hexamer acts as an ATP-dependent pump, pulling dsDNA into and through the RuvAB complex. HJ branch migration allows RuvC to scan DNA until it finds its consensus sequence, where it cleaves and resolves the cruciform DNA. The sequence is that of Holliday junction branch migration complex subunit RuvA from Helicobacter pylori (strain HPAG1).